We begin with the raw amino-acid sequence, 482 residues long: Probable 2-carboxy-D-arabinitol-1-phosphatase (482 aa).

Residues 1-34 constitute a chloroplast transit peptide; it reads MISLPLTTPILPSRCLLHKTRRQNSTRRRLLIRS. Residue His-55 is the Tele-phosphohistidine intermediate of the active site. The Proton donor/acceptor role is filled by Glu-129.

Belongs to the phosphoglycerate mutase family.

It is found in the plastid. The protein resides in the chloroplast stroma. It catalyses the reaction 2-carboxy-D-arabinitol 1-phosphate + H2O = 2-carboxy-D-arabinitol + phosphate. In terms of biological role, phosphoglycerate mutase-like protein lacking PGM activity, but having 2-carboxy-D-arabinitol 1-phosphate (CA1P) phosphatase activity. Prevents the accumulation of D-glycero-2,3-pentodiulose-1,5-bisphosphate (PDBP) a potent inhibitor of ribulose-1,5-bisphosphate carboxylase (RuBisCO). PDBP is produced during the oxidation of ribulose-1,5-bisphosphate, the substrate of RuBisCO. The chain is Probable 2-carboxy-D-arabinitol-1-phosphatase from Arabidopsis thaliana (Mouse-ear cress).